A 42-amino-acid polypeptide reads, in one-letter code: Beta-defensin 13 (42 aa).

3 cysteine pairs are disulfide-bonded: Cys-9–Cys-38, Cys-16–Cys-31, and Cys-21–Cys-39.

The protein belongs to the beta-defensin family. As to expression, neutrophilic granules.

The protein resides in the secreted. In terms of biological role, has bactericidal activity. Active against E.coli ML35 and S.aureus 502A. The sequence is that of Beta-defensin 13 (DEFB13) from Bos taurus (Bovine).